A 535-amino-acid chain; its full sequence is Pre-mRNA-splicing factor SLU7-A (535 aa).

The segment at 21–44 is disordered; sequence EEARKAGLAPAEVDEDGKEINPHI. The segment at 96 to 109 adopts a CCHC-type zinc-finger fold; that stretch reads CQNCGAMTHTAKAC. The segment covering 176–190 has biased composition (basic and acidic residues); the sequence is LKKLEEKNNNEKGDD. Disordered stretches follow at residues 176–204 and 489–508; these read LKKLEEKNNNEKGDDANSDGEEDEDDLRV and EDLSRREEKDERKRKYNVKY. Residues 191–203 are compositionally biased toward acidic residues; that stretch reads ANSDGEEDEDDLR. S193 carries the post-translational modification Phosphoserine. The short motif at 486–493 is the Nuclear localization signal element; sequence LKKEDLSR. Basic and acidic residues predominate over residues 489-501; that stretch reads EDLSRREEKDERK.

This sequence belongs to the SLU7 family. As to expression, mainly expressed in tissues undergoing cell proliferation, particularly in lateral organs.

The protein localises to the nucleus. Its function is as follows. Participates in the second catalytic step of pre-mRNA splicing, when the free hydroxyl group of exon I attacks the 3'-splice site to generate spliced mRNA and the excised lariat intron. Together with SMP2, involved in the timing of cell cycle arrest during leaf development, in a STRUWWELPETER (SWP) dependent manner; promotes cell proliferation in developing organs. The polypeptide is Pre-mRNA-splicing factor SLU7-A (Arabidopsis thaliana (Mouse-ear cress)).